Consider the following 548-residue polypeptide: Protein NRT1/ PTR FAMILY 2.4 (548 aa).

Helical transmembrane passes span 29 to 49, 65 to 85, 88 to 108, 136 to 156, 172 to 192, 200 to 220, 316 to 336, 354 to 374, 393 to 413, 429 to 449, 468 to 488, and 508 to 528; these read TLLG…VFLI, IVNG…DSFF, IPVI…LTLI, ILYA…FILA, FFNW…TAIV, WKLG…IFVA, LVPL…QMSM, VSAG…IILN, LQKV…SAVV, VLWL…HFPA, SLTS…IDVI, and YLVL…CSWF.

The protein belongs to the major facilitator superfamily. Proton-dependent oligopeptide transporter (POT/PTR) (TC 2.A.17) family. As to expression, strongly expressed in the root stele.

The protein resides in the membrane. In terms of biological role, transporter involved in a passive nitrate efflux. The sequence is that of Protein NRT1/ PTR FAMILY 2.4 (NPF2.4) from Arabidopsis thaliana (Mouse-ear cress).